The sequence spans 398 residues: Abhydrolase domain-containing protein 2 (398 aa).

The Cytoplasmic segment spans residues Met-1–Ala-4. A helical; Signal-anchor for type II membrane protein membrane pass occupies residues Phe-5–Val-22. Over His-23–Pro-398 the chain is Extracellular. The AB hydrolase-1 domain maps to Val-113–Gly-365. Active-site charge relay system residues include Ser-192, Asp-328, and His-359.

Belongs to the AB hydrolase superfamily. AB hydrolase 4 family.

Its subcellular location is the membrane. The polypeptide is Abhydrolase domain-containing protein 2 (Hydr2) (Drosophila melanogaster (Fruit fly)).